Reading from the N-terminus, the 551-residue chain is MRAFFLPFIQDALQKAGIETDKEIQIDKPNDKKFGDFSTNIAFLVAKEARKNPRELAGQLIGLLDFPEGTVTKTEVAGPGFINFHLAPAFFMRSAQEVLAKGEGFGCNESGKGLKAIVEYVSANPTGPLTIGRGRGGVLGDCIANLLETQGYEVTREYYFNDAGRQMQILAESVRYRYLEKCGQVIEFPETHYQGDYIGEIAETLFIEHGDGLAATDELTIFKEAAEAVIFSSIRKTLERLLITHDSFFNEHTLYQSREGQPSANQRVIDALDAKGFIGNYDGATWFMTTKLGQEKDKVLIKSSGDPSYRLPDIAYHVTKFERGFDLMVNVFGADHIDEYPDVLEALKILGYDTSKVKIAINQFVTTTVGGQTVKMSTRKGNADLLDDLIDDVGADATRLFFIMRGKDSHLNFDVELAKKQSKDNPVFYLQYAHARICSLVRMAEKEVGFDEATAIGAGLPLLSSEPEIDLASALLDFPDIIQSSLRQLEPQKMVEYLHTVAERYHKFYQECPILKADEHLRTARLELSLAVRQVLRNGFKILGISAPESM.

Positions 123 to 133 (ANPTGPLTIGR) match the 'HIGH' region motif.

This sequence belongs to the class-I aminoacyl-tRNA synthetase family. In terms of assembly, monomer.

Its subcellular location is the cytoplasm. It catalyses the reaction tRNA(Arg) + L-arginine + ATP = L-arginyl-tRNA(Arg) + AMP + diphosphate. This is Arginine--tRNA ligase from Chlorobaculum tepidum (strain ATCC 49652 / DSM 12025 / NBRC 103806 / TLS) (Chlorobium tepidum).